The sequence spans 735 residues: Protein argonaute (735 aa).

The interval 1–94 (MDLLSNLRRS…LVQMGTKQLD (94 aa)) is N-terminal domain. The segment at 95-180 (CRNDAHRCAL…IDIHHRFYTP (86 aa)) is linker L1. The interval 181–284 (WTVHQWLEQY…SPSLTMEMLA (104 aa)) is PAZ domain. Residues 285-369 (KVAEDSTVCD…SKTADIRNKG (85 aa)) are linker L2. Residues 370-498 (CAKIGETSFG…LLCKAGWQPI (129 aa)) form a mid domain region. The tract at residues 499–735 (QLESVDHPEV…NISRDKLIAV (237 aa)) is PIWI domain. Active-site residues include Asp-516, Glu-550, Asp-584, and Asp-709. Asp-516 is a Mn(2+) binding site. Mn(2+) is bound by residues Asp-584, Asp-709, and Val-735.

Belongs to the argonaute family. Long pAgo subfamily. Copurifies with SSB proteins Synpcc7942_0079 and Synpcc7942_0301 as well as other proteins. It depends on Mn(2+) as a cofactor.

Functionally, a DNA-guided ssDNA endonuclease that might play a role in defense against invading mobile genetic elements. Uses short ssDNA sequences as guides (gDNA) to bind complementary target strands, resulting in cleavage of the target DNA (tDNA). The cleavage site is 10 nucleotides (nt) downstream of the target residue base-paired with the 5'-end of the gDNA. Both 5'-P and 5'-OH gDNAs confer activity; a 5'-OH guide cleaves between nt 10-11 and nt 11-12. Guide DNA mismatches in the seed (nt 2-9) can enhance activity, mismatches 1-5 nt after the cleavage site block activity. Has no appreciable activity with guide RNA or on target RNA. In situ binds to 5'-phosphorylated DNA 14-20 nt in length; small DNA maps over the chromosome and plasmid with some preference for the replication origin and the probable termination site. Also has weak guide-independent nuclease activity on DNA called 'chopping'. Overexpression of wild-type or catalytically inactive mutant has no visible effect during growth under continuous high light for up to a month. This Synechococcus elongatus (strain ATCC 33912 / PCC 7942 / FACHB-805) (Anacystis nidulans R2) protein is Protein argonaute.